A 247-amino-acid polypeptide reads, in one-letter code: 2,3-bisphosphoglycerate-dependent phosphoglycerate mutase (247 aa).

Residues 8-15, 21-22, Arg-60, 87-90, Lys-98, 114-115, and 183-184 each bind substrate; these read RHGQSLWN, TG, ERHY, RR, and GN. His-9 acts as the Tele-phosphohistidine intermediate in catalysis. Residue Glu-87 is the Proton donor/acceptor of the active site.

The protein belongs to the phosphoglycerate mutase family. BPG-dependent PGAM subfamily.

It carries out the reaction (2R)-2-phosphoglycerate = (2R)-3-phosphoglycerate. The protein operates within carbohydrate degradation; glycolysis; pyruvate from D-glyceraldehyde 3-phosphate: step 3/5. Its function is as follows. Catalyzes the interconversion of 2-phosphoglycerate and 3-phosphoglycerate. In Hydrogenobaculum sp. (strain Y04AAS1), this protein is 2,3-bisphosphoglycerate-dependent phosphoglycerate mutase.